The primary structure comprises 821 residues: G-type lectin S-receptor-like serine/threonine-protein kinase SD2-5 (821 aa).

Residues 1–21 (MRGVFIVIVTCLVFLPDPLRA) form the signal peptide. The Extracellular segment spans residues 22-429 (GVASIGSITP…NGEDDGKHFP (408 aa)). The Bulb-type lectin domain occupies 33-148 (FGGSQMNYIN…DGTSIWESFD (116 aa)). N-linked (GlcNAc...) asparagine glycans are attached at residues Asn51, Asn121, Asn174, and Asn248. The 35-residue stretch at 280–314 (PSDLCGTPEPCGPYYVCSGSKVCGCVSGLSRARSD) folds into the EGF-like; atypical domain. Cystine bridges form between Cys284–Cys296 and Cys290–Cys302. One can recognise a PAN domain in the interval 323 to 411 (CKKTKDNATL…SGFVSYIKIA (89 aa)). 3 N-linked (GlcNAc...) asparagine glycosylation sites follow: Asn329, Asn370, and Asn380. 2 disulfide bridges follow: Cys363-Cys385 and Cys367-Cys373. A helical transmembrane segment spans residues 430 to 450 (YVVIIVVVTVFIIAVLIFVAF). Residues 451-821 (RIHKRKKMIL…LSAVRLSGPR (371 aa)) are Cytoplasmic-facing. One can recognise a Protein kinase domain in the interval 493–768 (NNFSVKLGQG…KVVQMLEGVF (276 aa)). ATP is bound by residues 499 to 507 (LGQGGFGSV) and Lys521. The segment at 581–599 (KDGDVLLDWDTRFNIALGT) is caM-binding. Residue Asp618 is the Proton acceptor of the active site. Ser635 carries the post-translational modification Phosphoserine. The residue at position 652 (Thr652) is a Phosphothreonine.

The protein belongs to the protein kinase superfamily. Ser/Thr protein kinase family. In terms of assembly, interacts with PUB9, PUB13, PUB14 and PUB29.

It localises to the membrane. The catalysed reaction is L-seryl-[protein] + ATP = O-phospho-L-seryl-[protein] + ADP + H(+). It catalyses the reaction L-threonyl-[protein] + ATP = O-phospho-L-threonyl-[protein] + ADP + H(+). The polypeptide is G-type lectin S-receptor-like serine/threonine-protein kinase SD2-5 (SD25) (Arabidopsis thaliana (Mouse-ear cress)).